Reading from the N-terminus, the 60-residue chain is Large ribosomal subunit protein bL32 (60 aa).

The span at 1–20 (MAVPKRKTSPSRRNMRRSHH) shows a compositional bias: basic residues. A disordered region spans residues 1 to 60 (MAVPKRKTSPSRRNMRRSHHALGANSFIEDKDTGELRRPHHVDLKTGMYNGKQILTPKED). The span at 28–44 (IEDKDTGELRRPHHVDL) shows a compositional bias: basic and acidic residues.

The protein belongs to the bacterial ribosomal protein bL32 family.

The sequence is that of Large ribosomal subunit protein bL32 from Caulobacter vibrioides (strain ATCC 19089 / CIP 103742 / CB 15) (Caulobacter crescentus).